A 377-amino-acid chain; its full sequence is Nucleosome assembly protein 1;2 (377 aa).

Residues 26 to 80 (VNVLKNKLHDLTGKHSNVTESLSPNVRKRVEALREIQTEHDELEAKFFEERAALE) adopt a coiled-coil conformation. The Nuclear export signal motif lies at 47 to 62 (LSPNVRKRVEALREIQ). A Nuclear localization signal motif is present at residues 223–228 (KKKPKK). The disordered stretch occupies residues 298–377 (EAAEDDYAEL…GERPPECKQQ (80 aa)). The span at 299–342 (AAEDDYAELEDDEDEDDDEEDDEDEDEEEEDEEDDEDEEEDEDE) shows a compositional bias: acidic residues. Cys-374 bears the Cysteine methyl ester mark. Cys-374 carries the S-farnesyl cysteine lipid modification. Positions 375 to 377 (KQQ) are cleaved as a propeptide — removed in mature form.

It belongs to the nucleosome assembly protein (NAP) family. Binds preferentially histone H1 in vitro. Interacts with CYCB1;1.

It localises to the nucleus. Its subcellular location is the cytoplasm. Its function is as follows. May modulate chromatin structure by regulation of nucleosome assembly/disassembly. Could function together with B-type cyclins in the regulation of microtubule dynamics. In Nicotiana tabacum (Common tobacco), this protein is Nucleosome assembly protein 1;2 (NAP1;2).